The following is a 56-amino-acid chain: UPF0391 membrane protein Noc_0482 (56 aa).

The next 2 membrane-spanning stretches (helical) occupy residues 1–21 (MFGW…FGFT) and 29–49 (HIAW…LLLG).

Belongs to the UPF0391 family.

The protein resides in the cell membrane. In Nitrosococcus oceani (strain ATCC 19707 / BCRC 17464 / JCM 30415 / NCIMB 11848 / C-107), this protein is UPF0391 membrane protein Noc_0482.